We begin with the raw amino-acid sequence, 287 residues long: Festuclavine synthase I (287 aa).

It belongs to the fgaFS/easG family.

The enzyme catalyses festuclavine + NAD(+) = 6,8-dimethyl-6,7-didehydroergoline + NADH + H(+). It participates in alkaloid biosynthesis; ergot alkaloid biosynthesis. Festuclavine synthase; part of the gene cluster that mediates the biosynthesis of isofumigaclavines, fungal ergot alkaloids. The tryptophan dimethylallyltransferase ifgA catalyzes the first step of ergot alkaloid biosynthesis by condensing dimethylallyl diphosphate (DMAP) and tryptophan to form 4-dimethylallyl-L-tryptophan. The second step is catalyzed by the methyltransferase ifgB that methylates 4-dimethylallyl-L-tryptophan in the presence of S-adenosyl-L-methionine, resulting in the formation of N-methyl-dimethylallyl-L-tryptophan. The catalase ifgD and the FAD-dependent oxidoreductase ifgC then transform N-methyl-dimethylallyl-L-tryptophan to chanoclavine-I which is further oxidized by ifgE in the presence of NAD(+), resulting in the formation of chanoclavine-I aldehyde. The chanoclavine-I aldehyde reductases ifgG and/or fgaOx3 reduce chanoclavine-I aldehyde to dihydrochanoclavine-I aldehyde that spontaneously dehydrates to form 6,8-dimethyl-6,7-didehydroergoline. The festuclavine dehydrogenases ifgF1 and/or ifgF2 then catalyze the reduction of 6,8-dimethyl-6,7-didehydroergoline to form festuclavine. Hydrolysis of festuclavine by a yet undetermined cytochrome P450 monooxygenase (called ifgH) then leads to the formation of isofumigaclavine B which is in turn acetylated by ifgI to isofumigaclavine A. Penicillium roqueforti has interestingly at least two sets of genes for the consumption of chanoclavine-I aldehyde on three different loci, the OYEs ifgG/fgaOx3 and the festuclavine synthase homologs ifgF1/ifgF2. The reason for the duplication of these genes is unclear, probably to ensure the conversion of chanoclavine-I aldehyde by differential gene expression under various environmental conditions. The polypeptide is Festuclavine synthase I (Penicillium roqueforti (strain FM164)).